The chain runs to 465 residues: UDP-N-acetylmuramate--L-alanine ligase (465 aa).

112–118 serves as a coordination point for ATP; that stretch reads GTHGKTT.

It belongs to the MurCDEF family.

The protein resides in the cytoplasm. The enzyme catalyses UDP-N-acetyl-alpha-D-muramate + L-alanine + ATP = UDP-N-acetyl-alpha-D-muramoyl-L-alanine + ADP + phosphate + H(+). It functions in the pathway cell wall biogenesis; peptidoglycan biosynthesis. Its function is as follows. Cell wall formation. This is UDP-N-acetylmuramate--L-alanine ligase from Burkholderia pseudomallei (strain 1106a).